The following is a 223-amino-acid chain: Orotate phosphoribosyltransferase (223 aa).

5-phospho-alpha-D-ribose 1-diphosphate is bound by residues R107, K108, K111, H113, and 133 to 141 (EDLTTAGGS). T137 lines the orotate pocket. Positions 192 to 211 (SPGSRSSSTTRRCRKSSPSS) are enriched in low complexity. The segment at 192 to 212 (SPGSRSSSTTRRCRKSSPSSM) is disordered.

Belongs to the purine/pyrimidine phosphoribosyltransferase family. PyrE subfamily. In terms of assembly, homodimer. Mg(2+) serves as cofactor.

It carries out the reaction orotidine 5'-phosphate + diphosphate = orotate + 5-phospho-alpha-D-ribose 1-diphosphate. It functions in the pathway pyrimidine metabolism; UMP biosynthesis via de novo pathway; UMP from orotate: step 1/2. Its function is as follows. Catalyzes the transfer of a ribosyl phosphate group from 5-phosphoribose 1-diphosphate to orotate, leading to the formation of orotidine monophosphate (OMP). In Rhizobium leguminosarum bv. trifolii, this protein is Orotate phosphoribosyltransferase (pyrE).